The following is a 345-amino-acid chain: N-acetyl-gamma-glutamyl-phosphate reductase (345 aa).

Cys149 is an active-site residue.

This sequence belongs to the NAGSA dehydrogenase family. Type 1 subfamily.

It localises to the cytoplasm. It carries out the reaction N-acetyl-L-glutamate 5-semialdehyde + phosphate + NADP(+) = N-acetyl-L-glutamyl 5-phosphate + NADPH + H(+). Its pathway is amino-acid biosynthesis; L-arginine biosynthesis; N(2)-acetyl-L-ornithine from L-glutamate: step 3/4. In terms of biological role, catalyzes the NADPH-dependent reduction of N-acetyl-5-glutamyl phosphate to yield N-acetyl-L-glutamate 5-semialdehyde. The chain is N-acetyl-gamma-glutamyl-phosphate reductase from Bacillus cereus (strain B4264).